Consider the following 238-residue polypeptide: Peroxisomal biogenesis factor 11 (238 aa).

The protein belongs to the peroxin-11 family.

It is found in the mitochondrion. The protein resides in the peroxisome membrane. Its function is as follows. Involved in peroxisomal proliferation. Promotes peroxisome division and biogenesis. This is Peroxisomal biogenesis factor 11 (pex11) from Schizosaccharomyces pombe (strain 972 / ATCC 24843) (Fission yeast).